A 340-amino-acid polypeptide reads, in one-letter code: uncharacterized protein (340 aa).

An RING-CH-type zinc finger spans residues Lys-6–Ala-70. Residues Cys-14, Cys-17, Cys-37, Cys-39, His-44, Cys-47, Cys-60, and Cys-63 each contribute to the Zn(2+) site. 3 consecutive transmembrane segments (helical) span residues Glu-249–Leu-269, Pro-274–Thr-294, and Ile-300–Trp-320.

It is found in the membrane. This is an uncharacterized protein from Schizosaccharomyces pombe (strain 972 / ATCC 24843) (Fission yeast).